The following is a 306-amino-acid chain: MRVLFAGTPAVAVPSLDALVEAGFDVVAVLTRPDAPIGRKRVLTPSPVAARAAELGLDVIYAAKVDDAAIEQISAAAPDVAAIVAYGGLVPPAALAIPRHGWINLHFSLLPAWRGAAPVQRSVMAGDDVTGAVTFQLEKGLDTGPVFGTLTEAVGPEDTSGQLLERLSHSGAVLLAQTLSAIETGKASAVPQAGDVSLAPKLTLEDGHLNWHHPALAIGRQARGATPEPGAWTLLDGQRVKLDPVRLRPDVEDLAPGALAFHGKSVLVGTGSHAVELTRIQPAGKKMMAAPDWARGIGSLEGVVFE.

108–111 provides a ligand contact to (6S)-5,6,7,8-tetrahydrofolate; the sequence is SLLP.

It belongs to the Fmt family.

The catalysed reaction is L-methionyl-tRNA(fMet) + (6R)-10-formyltetrahydrofolate = N-formyl-L-methionyl-tRNA(fMet) + (6S)-5,6,7,8-tetrahydrofolate + H(+). Functionally, attaches a formyl group to the free amino group of methionyl-tRNA(fMet). The formyl group appears to play a dual role in the initiator identity of N-formylmethionyl-tRNA by promoting its recognition by IF2 and preventing the misappropriation of this tRNA by the elongation apparatus. The protein is Methionyl-tRNA formyltransferase of Pseudarthrobacter chlorophenolicus (strain ATCC 700700 / DSM 12829 / CIP 107037 / JCM 12360 / KCTC 9906 / NCIMB 13794 / A6) (Arthrobacter chlorophenolicus).